The primary structure comprises 908 residues: UPF0182 protein NT01CX_0852 (908 aa).

The next 7 membrane-spanning stretches (helical) occupy residues Ile8–Ile28, Phe47–Thr67, Ile96–Tyr116, Leu157–Ile177, Leu209–Trp229, Phe253–Leu273, and Ile280–Ala300.

It belongs to the UPF0182 family.

It is found in the cell membrane. This chain is UPF0182 protein NT01CX_0852, found in Clostridium novyi (strain NT).